We begin with the raw amino-acid sequence, 99 residues long: Sm-like protein LSM7 (99 aa).

One can recognise a Sm domain in the interval 6-86; the sequence is ETVLDLAKFV…VMLVSPTDGT (81 aa).

This sequence belongs to the snRNP Sm proteins family. As to quaternary structure, component of the heptameric LSM1-LSM7 complex that forms a seven-membered ring structure with a donut shape. The LSM subunits are arranged in the order LSM1, LSM2, LSM3, LSM6, LSM5, LSM7 and LSM4. Component of the heptameric LSM2-LSM8 complex that forms a seven-membered ring structure with a donut shape. The LSM subunits are arranged in the order LSM8, LSM2, LSM3, LSM6, LSM5, LSM7 and LSM4. LSM7 subunit interacts only with its two neighboring subunits, LSM5 and LSM4. As to expression, expressed in roots, leaves, stems, flowers and siliques.

It localises to the cytoplasm. The protein resides in the nucleus. Functionally, component of LSM protein complexes, which are involved in RNA processing. Component of the cytoplasmic LSM1-LSM7 complex which is involved in mRNA degradation by promoting decapping and leading to accurate 5'-3' mRNA decay. The cytoplasmic LSM1-LSM7 complex regulates developmental gene expression by the decapping of specific development-related transcripts. Component of the nuclear LSM2-LSM8 complex which is involved splicing nuclear mRNAs. LSM2-LSM8 binds directly to the U6 small nuclear RNAs (snRNAs) and is essential for accurate splicing of selected development-related mRNAs through the stabilization of the spliceosomal U6 snRNA. Plays a critical role in the regulation of development-related gene expression. This is Sm-like protein LSM7 from Arabidopsis thaliana (Mouse-ear cress).